We begin with the raw amino-acid sequence, 517 residues long: Ladinin-1 (517 aa).

The segment at 1-401 (MAVSRKDWSA…SASMKLPDNT (401 aa)) is disordered. The residue at position 38 (serine 38) is a Phosphoserine. Polar residues predominate over residues 48–58 (LSQNGDRQASA). Phosphoserine is present on residues serine 64, serine 78, serine 121, and serine 123. Residues 120-131 (NSLSPVQATQKP) are compositionally biased toward polar residues. Composition is skewed to basic and acidic residues over residues 134 to 151 (SKKE…REQR) and 161 to 174 (LVGR…KGVP). 8 SEK repeats span residues 203 to 205 (SEK), 209 to 211 (SEK), 215 to 217 (SEK), 221 to 223 (SEK), 227 to 229 (SEK), 239 to 241 (SEK), 257 to 259 (SEK), and 269 to 271 (SEK). Residues 203-271 (SEKVLASEKT…IFEKALASEK (69 aa)) are 8 X SEK repeats. A compositionally biased stretch (basic and acidic residues) spans 219–233 (AVSEKRNSSEKKSVL). 3 positions are modified to phosphoserine: serine 347, serine 356, and serine 394. The segment covering 355-373 (SSPTQRTYSSSLKRSSPRT) has biased composition (polar residues). Position 424 is an omega-N-methylarginine (arginine 424). Residues 481 to 517 (RTQESGDQDPQEAQKASSATERTQWGQKSDSSLDAEV) form a disordered region. Serine 485 is subject to Phosphoserine. Positions 494–517 (QKASSATERTQWGQKSDSSLDAEV) are enriched in polar residues.

The protein resides in the secreted. The protein localises to the extracellular space. It is found in the extracellular matrix. Its subcellular location is the basement membrane. Anchoring filament protein which is a component of the basement membrane zone. The polypeptide is Ladinin-1 (LAD1) (Homo sapiens (Human)).